The chain runs to 67 residues: Small ribosomal subunit protein bS21 (67 aa).

Belongs to the bacterial ribosomal protein bS21 family.

This is Small ribosomal subunit protein bS21 from Granulibacter bethesdensis (strain ATCC BAA-1260 / CGDNIH1).